Consider the following 492-residue polypeptide: UDP-N-acetylmuramoyl-L-alanyl-D-glutamate--2,6-diaminopimelate ligase (492 aa).

S30 contacts UDP-N-acetyl-alpha-D-muramoyl-L-alanyl-D-glutamate. Residue G114–S120 coordinates ATP. Residues T156–T157, S183, Q189, and R191 each bind UDP-N-acetyl-alpha-D-muramoyl-L-alanyl-D-glutamate. An N6-carboxylysine modification is found at K223. Meso-2,6-diaminopimelate contacts are provided by residues R389, D413 to R416, G462, and E466. The short motif at D413 to R416 is the Meso-diaminopimelate recognition motif element.

The protein belongs to the MurCDEF family. MurE subfamily. It depends on Mg(2+) as a cofactor. In terms of processing, carboxylation is probably crucial for Mg(2+) binding and, consequently, for the gamma-phosphate positioning of ATP.

It is found in the cytoplasm. The enzyme catalyses UDP-N-acetyl-alpha-D-muramoyl-L-alanyl-D-glutamate + meso-2,6-diaminopimelate + ATP = UDP-N-acetyl-alpha-D-muramoyl-L-alanyl-gamma-D-glutamyl-meso-2,6-diaminopimelate + ADP + phosphate + H(+). It participates in cell wall biogenesis; peptidoglycan biosynthesis. Its function is as follows. Catalyzes the addition of meso-diaminopimelic acid to the nucleotide precursor UDP-N-acetylmuramoyl-L-alanyl-D-glutamate (UMAG) in the biosynthesis of bacterial cell-wall peptidoglycan. The protein is UDP-N-acetylmuramoyl-L-alanyl-D-glutamate--2,6-diaminopimelate ligase of Neisseria meningitidis serogroup A / serotype 4A (strain DSM 15465 / Z2491).